The sequence spans 332 residues: MKKITTSAYMPTEIEVVNVSENVAKIIAYPFETGYAVTLAHPLRRLLYTSTVGFAPTAVKIDGVAHEFDSMRGMLEDVTLFIINLKNLRFKLKNDSKREVIEYSFKGPKEITGIDLNNDIVEIVNPDSYLATINEDAELKFSLIVEKGIGYVPSEEIRDYIDSEYIALDAFFTPVKKAVYEIENVLVEDNPDYEKIVLTVTTDGQVSPIEAFKHSIEAMYKQMSIFNNVLNIDVNMALTSSQNSNEHSKLLESVENLNLSARSFNCLDKADIRYIGELALMEESELKDLKNLGKKSLDEIKAVMAEIGYPFGENTLGDSKEALRKKISELKS.

Residues 1 to 230 (MKKITTSAYM…KQMSIFNNVL (230 aa)) are alpha N-terminal domain (alpha-NTD). Residues 246 to 332 (EHSKLLESVE…LRKKISELKS (87 aa)) are alpha C-terminal domain (alpha-CTD).

It belongs to the RNA polymerase alpha chain family. As to quaternary structure, homodimer. The RNAP catalytic core consists of 2 alpha, 1 beta, 1 beta' and 1 omega subunit. When a sigma factor is associated with the core the holoenzyme is formed, which can initiate transcription.

The enzyme catalyses RNA(n) + a ribonucleoside 5'-triphosphate = RNA(n+1) + diphosphate. In terms of biological role, DNA-dependent RNA polymerase catalyzes the transcription of DNA into RNA using the four ribonucleoside triphosphates as substrates. In Campylobacter fetus subsp. fetus (strain 82-40), this protein is DNA-directed RNA polymerase subunit alpha.